The sequence spans 397 residues: Cytochrome b (397 aa).

4 helical membrane-spanning segments follow: residues 48–68 (FGSMLGLCLVIQLLSGLLLSA), 92–113 (WMLRNIHANGSSMFFICIYAHI), 128–148 (WYFGVHLFLLTMAEAFLGYTL), and 193–213 (FYTLHFLLPFVMVAVVFLHLF). Residues His-98 and His-112 each contribute to the heme b site. Heme b-binding residues include His-197 and His-211. An a ubiquinone-binding site is contributed by His-216. 4 consecutive transmembrane segments (helical) span residues 241 to 261 (IKDLFGYVCFSFFFMYLVCVD), 303 to 323 (AGGVYVMFLSIVVLYLIPTLH), 335 to 355 (LNQVVFWVLVGSFISLTWIGA), and 362 to 382 (YIILGSAFQLFISLVYCWTPF).

This sequence belongs to the cytochrome b family. As to quaternary structure, the main subunits of complex b-c1 are: cytochrome b, cytochrome c1 and the Rieske protein. Heme b is required as a cofactor.

The protein resides in the mitochondrion inner membrane. Its function is as follows. Component of the ubiquinol-cytochrome c reductase complex (complex III or cytochrome b-c1 complex) that is part of the mitochondrial respiratory chain. The b-c1 complex mediates electron transfer from ubiquinol to cytochrome c. Contributes to the generation of a proton gradient across the mitochondrial membrane that is then used for ATP synthesis. This is Cytochrome b (MT-CYB) from Mytilus edulis (Blue mussel).